Consider the following 279-residue polypeptide: Cell division protein FtsQ (279 aa).

Positions 1-28 are disordered; it reads MTPMKKQLDKSLGSRRGATATRAKERAD. At 1–48 the chain is on the cytoplasmic side; sequence MTPMKKQLDKSLGSRRGATATRAKERADNRNTGPAAIVRLLAFIPWNR. The helical transmembrane segment at 49–69 threads the bilayer; the sequence is VLLHVSIFCFWLLVLSALIAG. Over 70-279 the chain is Periplasmic; the sequence is VKWLDRPVAT…WKADVTPEQG (210 aa). The POTRA domain occupies 75–144; sequence RPVATVQVVG…DAVQVDLEEE (70 aa).

Belongs to the FtsQ/DivIB family. FtsQ subfamily. As to quaternary structure, part of a complex composed of FtsB, FtsL and FtsQ.

Its subcellular location is the cell inner membrane. Essential cell division protein. May link together the upstream cell division proteins, which are predominantly cytoplasmic, with the downstream cell division proteins, which are predominantly periplasmic. May control correct divisome assembly. This Hahella chejuensis (strain KCTC 2396) protein is Cell division protein FtsQ.